The following is a 361-amino-acid chain: Ribosomal RNA large subunit methyltransferase M (361 aa).

S-adenosyl-L-methionine contacts are provided by residues Ser-193, 226–229 (CPGG), Asp-245, Asp-265, and Asp-283. The active-site Proton acceptor is the Lys-312.

Belongs to the class I-like SAM-binding methyltransferase superfamily. RNA methyltransferase RlmE family. RlmM subfamily. In terms of assembly, monomer.

It localises to the cytoplasm. It carries out the reaction cytidine(2498) in 23S rRNA + S-adenosyl-L-methionine = 2'-O-methylcytidine(2498) in 23S rRNA + S-adenosyl-L-homocysteine + H(+). Catalyzes the 2'-O-methylation at nucleotide C2498 in 23S rRNA. The sequence is that of Ribosomal RNA large subunit methyltransferase M from Histophilus somni (strain 129Pt) (Haemophilus somnus).